Here is a 556-residue protein sequence, read N- to C-terminus: Methyltransferase/ribosomally synthesized type II borosin cyclic peptide precursor pgiMA1 (556 aa).

Positions 1–250 are methyltransferase domain; it reads MSSASSDSNT…SCSTLYVPPL (250 aa). Residues Arg74, Tyr78, and Tyr100 contribute to the active site. The S-adenosyl-L-methionine site is built by Tyr100, His102, Val105, Gln174, Gly212, Ser243, and Thr244. The tract at residues 251–377 is clasp domain; that stretch reads THANKFSGNM…GAVFGVMKLR (127 aa). The precursor leader stretch occupies residues 378–386; it reads ASEVANEQG. Asp421, Asp434, Asp447, Asp460, Asp473, Asp486, Asp499, Asp512, Asp525, and Asp538 each carry N-methylaspartate. The propeptide occupies 543 to 556; it reads AVPVPDHVAGIPCM.

It in the N-terminal section; belongs to the precorrin methyltransferase family. As to quaternary structure, homodimer. Post-translationally, pgiMA1 automethylates at Asp-421, Asp-434, Asp-447, Asp-460, Asp-473, Asp-486, Asp-499, Asp-512, Asp-525 and Asp-538 before being processed, probably by the M64 family peptidase found in the genes surrounding PgiMA1, to release methylated peptides which then undergos macrocyclization with the N-terminus of the modified core peptides. Peptide backbone alpha-N-methylations change the physicochemical properties of amide bonds to provide structural constraints and other favorable characteristics including biological membrane permeability to peptides.

The protein operates within secondary metabolite biosynthesis. Functionally, fusion protein of the methyltransferase pgiM1 and 12 type II borosin core peptides; part of the gene cluster that mediates the biosynthesis of a type II borosin, a highly methylated cyclic peptide with potent biological activities. Type II borosins derive from the C-terminus of the fusion protein, and it is the same protein that methylates its own C-terminus using S-adenosyl methionine (SAM). The C-terminus is subsequently cleaved off and macrocyclized by a prolyloligopeptidase to give the final product. The chain is Methyltransferase/ribosomally synthesized type II borosin cyclic peptide precursor pgiMA1 from Phlebiopsis gigantea (strain 11061_1 CR5-6) (White-rot fungus).